The chain runs to 1228 residues: Serine/threonine-protein kinase CST20 (1228 aa).

A compositionally biased stretch (polar residues) spans 1–18; it reads MSILSENNPTQTSITDPN. Disordered stretches follow at residues 1–382 and 405–468; these read MSIL…TAHN and NSTN…HSQE. 2 stretches are compositionally biased toward low complexity: residues 57-70 and 95-123; these read NTTS…SLGS and ESGS…NPES. Over residues 148 to 159 the composition is skewed to basic and acidic residues; it reads HQGDDSDNEKQY. Composition is skewed to polar residues over residues 173–195, 205–222, and 232–244; these read DSYS…NNVS, TSSL…NENA, and PQVS…SFHD. Low complexity predominate over residues 246–255; the sequence is SSVISSSTSV. Composition is skewed to polar residues over residues 260–275 and 309–328; these read SNPT…SYKS and DTLS…TLQG. Positions 347-367 are enriched in low complexity; the sequence is NTSATSRNTSGTSTSTVVKNS. Residues 368–382 show a composition bias toward polar residues; that stretch reads RSGTSKLTSTSTAHN. Residues 437-466 show a composition bias toward low complexity; it reads KVRGVFSSMFGKNKSTSSSSSSNSGSNSHS. The CRIB domain maps to 473 to 486; it reads ISTPFNAKHLAHVG. Disordered stretches follow at residues 543–829 and 865–917; these read FHFD…ALAD and LREK…KQAA. Residues 548 to 559 show a composition bias toward polar residues; it reads NKSSSSGWSNEN. Gly residues predominate over residues 568–579; it reads SNSGSGGGGGGA. Over residues 602-611 the composition is skewed to polar residues; the sequence is ITPSQSMPTK. The segment covering 612–626 has biased composition (basic and acidic residues); that stretch reads TESKQSENQHPHEDN. Residues 627–640 are compositionally biased toward polar residues; the sequence is ATQYTPRTPTSHVQ. 3 stretches are compositionally biased toward low complexity: residues 668-681, 693-708, and 734-747; these read PSSQ…SQSD, ISPS…SKSL, and SIPK…SLSS. A compositionally biased stretch (polar residues) spans 748–759; that stretch reads QLRPATNGSTTA. Positions 787–805 are enriched in pro residues; it reads APPPPPSASPAPPVPPAPP. Positions 809–824 are enriched in polar residues; it reads LSEQTSEIPQQRTAPS. Basic and acidic residues predominate over residues 865–874; the sequence is LREKNERQNR. Polar residues predominate over residues 875–890; the sequence is QQETGQNNADTASGGS. The Protein kinase domain occupies 951–1203; that stretch reads YVDLVKIGQG…ADELLHDNFI (253 aa). Residues 957-965 and Lys-981 each bind ATP; that span reads IGQGASGGV. Asp-1071 functions as the Proton acceptor in the catalytic mechanism.

Belongs to the protein kinase superfamily. STE Ser/Thr protein kinase family. STE20 subfamily.

It is found in the cytoplasm. The protein localises to the nucleus. It carries out the reaction L-seryl-[protein] + ATP = O-phospho-L-seryl-[protein] + ADP + H(+). The enzyme catalyses L-threonyl-[protein] + ATP = O-phospho-L-threonyl-[protein] + ADP + H(+). Functionally, MAP4K component of the MAPK pathway required for the mating pheromone response, and the regulation of cell polarity and cell cycle. Phosphorylates histone H2B to form H2BS10ph. Required for hyphal formation and virulence. The protein is Serine/threonine-protein kinase CST20 (CST20) of Candida albicans (strain SC5314 / ATCC MYA-2876) (Yeast).